The primary structure comprises 463 residues: Nitrogenase vanadium-iron protein beta chain (463 aa).

Cys20, Cys45, Cys104, and Ser142 together coordinate [8Fe-7S] cluster.

This sequence belongs to the NifD/NifK/NifE/NifN family. In terms of assembly, hexamer of two alpha, two beta, and two delta chains. The cofactor is [8Fe-7S] cluster.

The catalysed reaction is N2 + 8 reduced [2Fe-2S]-[ferredoxin] + 16 ATP + 16 H2O = H2 + 8 oxidized [2Fe-2S]-[ferredoxin] + 2 NH4(+) + 16 ADP + 16 phosphate + 6 H(+). Functionally, this vanadium-iron protein is part of the nitrogenase complex that catalyzes the key enzymatic reactions in nitrogen fixation. In Trichormus variabilis (strain ATCC 29413 / PCC 7937) (Anabaena variabilis), this protein is Nitrogenase vanadium-iron protein beta chain (vnfK).